We begin with the raw amino-acid sequence, 84 residues long: Cytochrome b559 subunit alpha (84 aa).

A helical transmembrane segment spans residues 22 to 36 (IIHSITIPSLFVAGF). H24 contacts heme.

Belongs to the PsbE/PsbF family. Heterodimer of an alpha subunit and a beta subunit. PSII is composed of 1 copy each of membrane proteins PsbA, PsbB, PsbC, PsbD, PsbE, PsbF, PsbH, PsbI, PsbJ, PsbK, PsbL, PsbM, PsbT, PsbX, PsbY, PsbZ, Psb30/Ycf12, at least 3 peripheral proteins of the oxygen-evolving complex and a large number of cofactors. It forms dimeric complexes. Requires heme b as cofactor.

The protein localises to the plastid. It is found in the chloroplast thylakoid membrane. In terms of biological role, this b-type cytochrome is tightly associated with the reaction center of photosystem II (PSII). PSII is a light-driven water:plastoquinone oxidoreductase that uses light energy to abstract electrons from H(2)O, generating O(2) and a proton gradient subsequently used for ATP formation. It consists of a core antenna complex that captures photons, and an electron transfer chain that converts photonic excitation into a charge separation. This chain is Cytochrome b559 subunit alpha, found in Emiliania huxleyi (Coccolithophore).